The sequence spans 395 residues: Phosphopentomutase (395 aa).

The Mn(2+) site is built by Asp-13, Asp-288, His-293, Asp-329, His-330, and His-341.

Belongs to the phosphopentomutase family. It depends on Mn(2+) as a cofactor.

The protein resides in the cytoplasm. The enzyme catalyses 2-deoxy-alpha-D-ribose 1-phosphate = 2-deoxy-D-ribose 5-phosphate. The catalysed reaction is alpha-D-ribose 1-phosphate = D-ribose 5-phosphate. The protein operates within carbohydrate degradation; 2-deoxy-D-ribose 1-phosphate degradation; D-glyceraldehyde 3-phosphate and acetaldehyde from 2-deoxy-alpha-D-ribose 1-phosphate: step 1/2. In terms of biological role, isomerase that catalyzes the conversion of deoxy-ribose 1-phosphate (dRib-1-P) and ribose 1-phosphate (Rib-1-P) to deoxy-ribose 5-phosphate (dRib-5-P) and ribose 5-phosphate (Rib-5-P), respectively. In Agathobacter rectalis (strain ATCC 33656 / DSM 3377 / JCM 17463 / KCTC 5835 / VPI 0990) (Eubacterium rectale), this protein is Phosphopentomutase.